Consider the following 170-residue polypeptide: Cytochrome b6-f complex subunit 4 (170 aa).

A run of 3 helical transmembrane segments spans residues 36 to 56 (LLYI…GLAV), 95 to 115 (LLGV…PFLE), and 131 to 151 (TVFL…TLPI).

It belongs to the cytochrome b family. PetD subfamily. The 4 large subunits of the cytochrome b6-f complex are cytochrome b6, subunit IV (17 kDa polypeptide, petD), cytochrome f and the Rieske protein, while the 4 small subunits are petG, petL, petM and petN. The complex functions as a dimer.

The protein resides in the plastid. The protein localises to the chloroplast thylakoid membrane. Functionally, component of the cytochrome b6-f complex, which mediates electron transfer between photosystem II (PSII) and photosystem I (PSI), cyclic electron flow around PSI, and state transitions. This Nymphaea alba (White water-lily) protein is Cytochrome b6-f complex subunit 4.